The primary structure comprises 330 residues: Ferredoxin--NADP reductase (330 aa).

Residues Glu-35, Gln-43, Tyr-48, Val-90, Phe-123, Asp-285, and Thr-326 each contribute to the FAD site.

It belongs to the ferredoxin--NADP reductase type 2 family. Homodimer. FAD is required as a cofactor.

It carries out the reaction 2 reduced [2Fe-2S]-[ferredoxin] + NADP(+) + H(+) = 2 oxidized [2Fe-2S]-[ferredoxin] + NADPH. This is Ferredoxin--NADP reductase from Streptococcus pyogenes serotype M2 (strain MGAS10270).